Reading from the N-terminus, the 249-residue chain is GTP cyclohydrolase 1 type 2 homolog (249 aa).

Residues histidine 64, histidine 65, aspartate 102, histidine 217, and glutamate 221 each coordinate a divalent metal cation.

This sequence belongs to the GTP cyclohydrolase I type 2/NIF3 family. As to quaternary structure, homohexamer.

This Neisseria meningitidis serogroup A / serotype 4A (strain DSM 15465 / Z2491) protein is GTP cyclohydrolase 1 type 2 homolog.